The chain runs to 553 residues: Arylsulfatase K (553 aa).

Residues 1 to 16 form the signal peptide; that stretch reads MLLLLVSVVAALALAA. 2 residues coordinate Ca(2+): Asp-40 and Cys-80. Catalysis depends on Cys-80, which acts as the Nucleophile. Cys-80 is modified (3-oxoalanine (Cys)). N-linked (GlcNAc...) asparagine glycosylation occurs at Asn-108. A substrate-binding site is contributed by Lys-128. A glycan (N-linked (GlcNAc...) asparagine) is linked at Asn-191. A substrate-binding site is contributed by His-249. An N-linked (GlcNAc...) asparagine glycan is attached at Asn-260. The Ca(2+) site is built by Asp-311 and His-312. 3 N-linked (GlcNAc...) asparagine glycosylation sites follow: Asn-373, Asn-411, and Asn-496. A disordered region spans residues 530-553; it reads SPLASSPTQSTSGSQPTLPQSTSG. Residues 534-553 show a composition bias toward low complexity; sequence SSPTQSTSGSQPTLPQSTSG.

It belongs to the sulfatase family. The cofactor is Ca(2+). Post-translationally, the conversion to 3-oxoalanine (also known as C-formylglycine, FGly), of a serine or cysteine residue in prokaryotes and of a cysteine residue in eukaryotes, is critical for catalytic activity. The 75-kDa precursor undergoes proteolytic processing to yield a 23 kDa form. In terms of processing, N-glycosylated with both high mannose and complex type sugars.

The protein localises to the secreted. The protein resides in the lysosome. The enzyme catalyses an aryl sulfate + H2O = a phenol + sulfate + H(+). It catalyses the reaction Hydrolysis of the 2-sulfate groups of the 2-O-sulfo-D-glucuronate residues of chondroitin sulfate, heparin and heparitin sulfate.. In terms of biological role, catalyzes the hydrolysis of pseudosubstrates such as p-nitrocatechol sulfate and p-nitrophenyl sulfate. Catalyzes the hydrolysis of the 2-sulfate groups of the 2-O-sulfo-D-glucuronate residues of chondroitin sulfate, heparin and heparitin sulfate. Acts selectively on 2-sulfoglucuronate and lacks activity against 2-sulfoiduronate. The sequence is that of Arylsulfatase K (Arsk) from Mus musculus (Mouse).